Consider the following 363-residue polypeptide: Chorismate synthase (363 aa).

Positions 48 and 54 each coordinate NADP(+). FMN-binding positions include 125 to 127, 237 to 238, Gly277, 292 to 296, and Arg318; these read RSS, NA, and KPTSS.

It belongs to the chorismate synthase family. As to quaternary structure, homotetramer. It depends on FMNH2 as a cofactor.

The catalysed reaction is 5-O-(1-carboxyvinyl)-3-phosphoshikimate = chorismate + phosphate. It participates in metabolic intermediate biosynthesis; chorismate biosynthesis; chorismate from D-erythrose 4-phosphate and phosphoenolpyruvate: step 7/7. In terms of biological role, catalyzes the anti-1,4-elimination of the C-3 phosphate and the C-6 proR hydrogen from 5-enolpyruvylshikimate-3-phosphate (EPSP) to yield chorismate, which is the branch point compound that serves as the starting substrate for the three terminal pathways of aromatic amino acid biosynthesis. This reaction introduces a second double bond into the aromatic ring system. This Pseudomonas putida (strain ATCC 700007 / DSM 6899 / JCM 31910 / BCRC 17059 / LMG 24140 / F1) protein is Chorismate synthase.